A 207-amino-acid chain; its full sequence is dITP/XTP pyrophosphatase (207 aa).

16–21 (SNNKGK) is a substrate binding site. The active-site Proton acceptor is aspartate 79. Aspartate 79 is a Mg(2+) binding site. Residues serine 80, 166–169 (FGYD), lysine 189, and 194–195 (HR) contribute to the substrate site.

The protein belongs to the HAM1 NTPase family. Homodimer. Mg(2+) is required as a cofactor.

The catalysed reaction is XTP + H2O = XMP + diphosphate + H(+). It catalyses the reaction dITP + H2O = dIMP + diphosphate + H(+). It carries out the reaction ITP + H2O = IMP + diphosphate + H(+). Its function is as follows. Pyrophosphatase that catalyzes the hydrolysis of nucleoside triphosphates to their monophosphate derivatives, with a high preference for the non-canonical purine nucleotides XTP (xanthosine triphosphate), dITP (deoxyinosine triphosphate) and ITP. Seems to function as a house-cleaning enzyme that removes non-canonical purine nucleotides from the nucleotide pool, thus preventing their incorporation into DNA/RNA and avoiding chromosomal lesions. In Acinetobacter baumannii (strain ATCC 17978 / DSM 105126 / CIP 53.77 / LMG 1025 / NCDC KC755 / 5377), this protein is dITP/XTP pyrophosphatase.